Reading from the N-terminus, the 228-residue chain is Prolactin (228 aa).

An N-terminal signal peptide occupies residues 1–29 (MCTKRSSLKGSLLLLLLISSLLLSRSVDS). C33 and C40 are joined by a disulfide. S55, S63, and S119 each carry phosphoserine. Disulfide bonds link C87/C203 and C220/C228.

This sequence belongs to the somatotropin/prolactin family. Interacts with PRLR.

It is found in the secreted. Prolactin acts primarily on the mammary gland by promoting lactation. The sequence is that of Prolactin (PRL) from Isoodon macrourus (Short-nosed bandicoot).